The chain runs to 143 residues: Nucleoside diphosphate kinase (143 aa).

ATP-binding residues include Lys11, Phe59, Arg87, Thr93, Arg104, and Asn114. The active-site Pros-phosphohistidine intermediate is the His117.

It belongs to the NDK family. In terms of assembly, homotetramer. It depends on Mg(2+) as a cofactor.

The protein resides in the cytoplasm. The enzyme catalyses a 2'-deoxyribonucleoside 5'-diphosphate + ATP = a 2'-deoxyribonucleoside 5'-triphosphate + ADP. The catalysed reaction is a ribonucleoside 5'-diphosphate + ATP = a ribonucleoside 5'-triphosphate + ADP. Its function is as follows. Major role in the synthesis of nucleoside triphosphates other than ATP. The ATP gamma phosphate is transferred to the NDP beta phosphate via a ping-pong mechanism, using a phosphorylated active-site intermediate. The protein is Nucleoside diphosphate kinase of Escherichia coli O81 (strain ED1a).